The following is a 68-amino-acid chain: Protein transport protein Sec61 subunit gamma (68 aa).

The Cytoplasmic segment spans residues 1–32; the sequence is MDQVTKFIEPGRQFAKDSIRLVKRCTKPDRKE. Residues 33 to 61 traverse the membrane as a helical segment; the sequence is FQKIAVATAIGFCIMGFIGFFVKLIHIPI. Over 62–68 the chain is Extracellular; sequence NNIIVGS.

This sequence belongs to the SecE/SEC61-gamma family. As to quaternary structure, heterotrimeric complex composed of SEC61-alpha, SEC61-beta and SEC61-gamma.

It is found in the endoplasmic reticulum membrane. Its function is as follows. Necessary for protein translocation in the endoplasmic reticulum. In Gryllotalpa orientalis (Oriental mole cricket), this protein is Protein transport protein Sec61 subunit gamma (SEC61G).